The sequence spans 355 residues: tRNA uridine(34) hydroxylase (355 aa).

Residues 146-240 form the Rhodanese domain; that stretch reads DDPDTLFVDM…YARKAKEQGL (95 aa). Cys-200 acts as the Cysteine persulfide intermediate in catalysis. The disordered stretch occupies residues 333–355; the sequence is NKSKGLLQATMHIPSPEKSADEK.

This sequence belongs to the TrhO family.

The catalysed reaction is uridine(34) in tRNA + AH2 + O2 = 5-hydroxyuridine(34) in tRNA + A + H2O. Catalyzes oxygen-dependent 5-hydroxyuridine (ho5U) modification at position 34 in tRNAs. This chain is tRNA uridine(34) hydroxylase, found in Yersinia pseudotuberculosis serotype O:1b (strain IP 31758).